The chain runs to 218 residues: MEPGFWHEKWQQQLIGFHQQDINPFLVKYWHTLALPAGAQVFVPLCGKSLDMCFLAEQGHQVIGCELNELAVQQFFEDNQLPMQQSALGEHQHYHTEQVSLYQGDIFTLPASITGKVSGFYDRAALIAWPESMRAQYAKQLAQLLPQGSVGLLVTLDYPQEALSGPPFAVSPTWVETHLSDDFDIQLLDCQDVLADNPRFVKKEVPWLNEAAYLLRRR.

Residues tryptophan 10, leucine 45, glutamate 66, and arginine 123 each coordinate S-adenosyl-L-methionine.

Belongs to the class I-like SAM-binding methyltransferase superfamily. TPMT family.

It localises to the cytoplasm. The enzyme catalyses S-adenosyl-L-methionine + a thiopurine = S-adenosyl-L-homocysteine + a thiopurine S-methylether.. This is Thiopurine S-methyltransferase from Shewanella sp. (strain ANA-3).